The sequence spans 127 residues: Holo-[acyl-carrier-protein] synthase (127 aa).

Mg(2+)-binding residues include Asp-7 and Glu-56.

It belongs to the P-Pant transferase superfamily. AcpS family. Requires Mg(2+) as cofactor.

The protein resides in the cytoplasm. The enzyme catalyses apo-[ACP] + CoA = holo-[ACP] + adenosine 3',5'-bisphosphate + H(+). Functionally, transfers the 4'-phosphopantetheine moiety from coenzyme A to a Ser of acyl-carrier-protein. The sequence is that of Holo-[acyl-carrier-protein] synthase from Onion yellows phytoplasma (strain OY-M).